The sequence spans 1306 residues: DNA-directed RNA polymerase subunit beta' (1306 aa).

4 residues coordinate Zn(2+): cysteine 214, cysteine 285, cysteine 292, and cysteine 295. 2 disordered regions span residues leucine 1234 to leucine 1263 and isoleucine 1281 to lysine 1306. The segment covering glutamine 1247 to proline 1259 has biased composition (basic and acidic residues).

It belongs to the RNA polymerase beta' chain family. RpoC2 subfamily. In cyanobacteria the RNAP catalytic core is composed of 2 alpha, 1 beta, 1 beta', 1 gamma and 1 omega subunit. When a sigma factor is associated with the core the holoenzyme is formed, which can initiate transcription. Zn(2+) is required as a cofactor.

The enzyme catalyses RNA(n) + a ribonucleoside 5'-triphosphate = RNA(n+1) + diphosphate. DNA-dependent RNA polymerase catalyzes the transcription of DNA into RNA using the four ribonucleoside triphosphates as substrates. The protein is DNA-directed RNA polymerase subunit beta' of Crocosphaera subtropica (strain ATCC 51142 / BH68) (Cyanothece sp. (strain ATCC 51142)).